We begin with the raw amino-acid sequence, 1009 residues long: MICAL-like protein 2 (1009 aa).

In terms of domain architecture, Calponin-homology (CH) spans 1–107 (MAAIKALQEW…YVSQYYNYFH (107 aa)). Positions 1 to 260 (MAAIKALQEW…KSSNLASRKP (260 aa)) are forms an intramolecular interaction with the C-terminal coiled coil domain keeping the protein in a closed conformation. Phosphoserine occurs at positions 110, 143, and 153. Disordered stretches follow at residues 114 to 180 (GMAG…PGTA), 247 to 268 (SVSP…ADTR), 348 to 447 (NSSP…TSKV), and 655 to 834 (SPSI…TSPV). Positions 144–171 (PAQTQRSPLSPARTNPVVQRNEGGSQRP) are enriched in polar residues. An LIM zinc-binding domain is found at 186–248 (SICGVCGKHV…THHSSEVTSV (63 aa)). The residue at position 249 (serine 249) is a Phosphoserine. The segment at 261–393 (GGVTADTRPF…QGQTASKGVK (133 aa)) is necessary and sufficient for interaction with actinins. The tract at residues 261-805 (GGVTADTRPF…EDGTRSCKEE (545 aa)) is mediates targeting to the cell plasma membrane. Positions 348 to 419 (NSSPIGWSSP…AWTSSASKTQ (72 aa)) are enriched in polar residues. The segment covering 430–442 (PSAPAPASAPAPA) has biased composition (pro residues). Basic and acidic residues predominate over residues 694 to 730 (EGWRARLKPVDKKTPAGRSLEQKEPVLAEPRIGDTSR). 2 stretches are compositionally biased toward low complexity: residues 731-746 (KASS…TLTS) and 755-769 (PAGS…SPSP). Serine 766 and serine 768 each carry phosphoserine. Residues 791–817 (EPKKQEDGTRSCKEEKSPTRWSRERSA) are compositionally biased toward basic and acidic residues. The tract at residues 806-913 (KSPTRWSRER…LMYKSKDQRL (108 aa)) is forms an intramolecular interaction with the N-terminal Calponin-homology and LIM zinc-binding domains-containing region keeping the protein in a closed conformation. A Phosphoserine modification is found at serine 832. One can recognise a bMERB domain in the interval 833 to 980 (PVRLHPDYIP…EQEEDQMLEN (148 aa)). Positions 841–880 (IPQEELQRQLQDIESQLDALELRGVELEKRLRAAEGDASE) form a coiled coil. The segment at 913–1009 (LEEQQLDLQG…WSSKSKSGQA (97 aa)) is mediates interaction with RAB13 and is required for transition from the closed to the open conformation.

As to quaternary structure, interacts with RAB13 (GTP-bound form); competes with RAB8A and is involved in tight junctions assembly. Interacts with RAB8A; competes with RAB13 and is involved in E-cadherin endocytic recycling. Interacts with RAB8B. Interacts (preferentially in opened conformation) with ACTN1 and ACTN4; stimulated by RAB13 activation. Interacts (via calponin-homology (CH) domain) with the filamins FLNA, FLNB and FLNC (via actin-binding domain). As to expression, detected in brain, lung, liver and kidney (at protein level).

The protein resides in the cell membrane. It is found in the cell junction. The protein localises to the tight junction. Its subcellular location is the recycling endosome. It localises to the cell projection. The protein resides in the neuron projection. It is found in the cytoplasm. The protein localises to the cytoskeleton. In terms of biological role, effector of small Rab GTPases RAB8A and RAB13 which is involved in junctional complexes assembly through the regulation of cell adhesion molecules transport to the plasma membrane and actin cytoskeleton reorganization. Regulates the endocytic recycling of occludins, claudins and E-cadherin to the plasma membrane and may thereby regulate the establishment of tight junctions and adherens junctions. In parallel, may regulate actin cytoskeleton reorganization directly through interaction with F-actin or indirectly through actinins and filamins. Undergoes liquid-liquid phase separation to form tubular recycling endosomes. Plays 2 sequential roles in the biogenesis of tubular recycling endosomes: first organizes phase separation and then the closed form formed by interaction with RAB8A promotes endosomal tubulation. This chain is MICAL-like protein 2 (Micall2), found in Mus musculus (Mouse).